The sequence spans 194 residues: dCTP deaminase (194 aa).

Residues 110 to 115, D128, 136 to 138, Y171, K178, and Q182 contribute to the dCTP site; these read RSSLAR and VLE. The Proton donor/acceptor role is filled by E138.

This sequence belongs to the dCTP deaminase family. In terms of assembly, homotrimer.

It catalyses the reaction dCTP + H2O + H(+) = dUTP + NH4(+). It participates in pyrimidine metabolism; dUMP biosynthesis; dUMP from dCTP (dUTP route): step 1/2. Functionally, catalyzes the deamination of dCTP to dUTP. This Haemophilus ducreyi (strain 35000HP / ATCC 700724) protein is dCTP deaminase.